A 340-amino-acid chain; its full sequence is Protein B17 (340 aa).

The protein belongs to the orthopoxvirus B17 protein family.

The sequence is that of Protein B17 from Vaccinia virus (strain Copenhagen) (VACV).